The sequence spans 541 residues: Membrane protein insertase YidC (541 aa).

Helical transmembrane passes span 7-27, 340-360, 415-435, 453-473, and 494-514; these read LFLV…QTDH, QLIH…TFIV, LGGC…YYML, LAAP…MFFI, and PVIF…YYIV.

Belongs to the OXA1/ALB3/YidC family. Type 1 subfamily. In terms of assembly, interacts with the Sec translocase complex via SecD. Specifically interacts with transmembrane segments of nascent integral membrane proteins during membrane integration.

The protein resides in the cell inner membrane. Required for the insertion and/or proper folding and/or complex formation of integral membrane proteins into the membrane. Involved in integration of membrane proteins that insert both dependently and independently of the Sec translocase complex, as well as at least some lipoproteins. Aids folding of multispanning membrane proteins. This Edwardsiella ictaluri (strain 93-146) protein is Membrane protein insertase YidC.